Here is a 466-residue protein sequence, read N- to C-terminus: Ribulose bisphosphate carboxylase large chain (466 aa).

Position 5 is an N6,N6,N6-trimethyllysine (lysine 5). Residues asparagine 114 and threonine 164 each coordinate substrate. Lysine 166 acts as the Proton acceptor in catalysis. Substrate is bound at residue lysine 168. Mg(2+) is bound by residues lysine 192, aspartate 194, and glutamate 195. Lysine 192 is subject to N6-carboxylysine. Histidine 285 functions as the Proton acceptor in the catalytic mechanism. Substrate contacts are provided by arginine 286, histidine 318, and serine 370.

It belongs to the RuBisCO large chain family. Type I subfamily. In terms of assembly, heterohexadecamer of 8 large chains and 8 small chains; disulfide-linked. The disulfide link is formed within the large subunit homodimers. It depends on Mg(2+) as a cofactor. Post-translationally, the disulfide bond which can form in the large chain dimeric partners within the hexadecamer appears to be associated with oxidative stress and protein turnover.

It localises to the plastid. The protein localises to the chloroplast. It carries out the reaction 2 (2R)-3-phosphoglycerate + 2 H(+) = D-ribulose 1,5-bisphosphate + CO2 + H2O. The enzyme catalyses D-ribulose 1,5-bisphosphate + O2 = 2-phosphoglycolate + (2R)-3-phosphoglycerate + 2 H(+). RuBisCO catalyzes two reactions: the carboxylation of D-ribulose 1,5-bisphosphate, the primary event in carbon dioxide fixation, as well as the oxidative fragmentation of the pentose substrate in the photorespiration process. Both reactions occur simultaneously and in competition at the same active site. The chain is Ribulose bisphosphate carboxylase large chain from Eremothamnus marlothianus.